We begin with the raw amino-acid sequence, 469 residues long: CBL-interacting serine/threonine-protein kinase 16 (469 aa).

The region spanning 15 to 278 (YNIGRLLGTG…MSEIKMIPWF (264 aa)) is the Protein kinase domain. ATP contacts are provided by residues 21–29 (LGTGNFAKV) and lysine 44. Aspartate 139 (proton acceptor) is an active-site residue. Positions 157 to 193 (DFGLSALMMPEGLGGRRGSSDDLLHTRCGTPAYVAPE) are activation loop. Serine 161 is modified (phosphoserine). Residue threonine 182 is modified to Phosphothreonine. Positions 290-320 (IDETIPSPPEPPTKKKKKDLNEKEDDGASPR) are disordered. An NAF domain is found at 317–342 (ASPRSFNAFQFITSMSSGFDLSNLFE). A PPI region spans residues 346–376 (KPKRMFTSKFPAKSVKERLETAAREMDMRVK). The disordered stretch occupies residues 447 to 469 (DDEDDVTTNDNVDTNDNKINNVS). Residues 454–469 (TNDNVDTNDNKINNVS) show a composition bias toward low complexity.

This sequence belongs to the protein kinase superfamily. CAMK Ser/Thr protein kinase family. SNF1 subfamily. As to quaternary structure, part of a K(+)-channel calcium-sensing kinase/phosphatase complex composed by a calcium sensor CBL (CBL1, CBL2, CBL3 or CBL9), a kinase CIPK (CIPK6, CIPK16 or CIPK23), a phosphatase PP2C (AIP1) and a K(+)-channel (AKT1). Interacts with AKT1, CBL1, CBL2, CBL3 and CBL9. It depends on Mn(2+) as a cofactor.

It carries out the reaction L-seryl-[protein] + ATP = O-phospho-L-seryl-[protein] + ADP + H(+). The catalysed reaction is L-threonyl-[protein] + ATP = O-phospho-L-threonyl-[protein] + ADP + H(+). In terms of biological role, CIPK serine-threonine protein kinases interact with CBL proteins. Binding of a CBL protein to the regulatory NAF domain of CIPK protein lead to the activation of the kinase in a calcium-dependent manner. Downstream of CBL1, CBL2, CBL3 and CBL9, regulates by phosphorylation the K(+) conductance and uptake of AKT1. The protein is CBL-interacting serine/threonine-protein kinase 16 (CIPK16) of Arabidopsis thaliana (Mouse-ear cress).